A 287-amino-acid polypeptide reads, in one-letter code: CBK1 kinase activator protein MOB2 (287 aa).

Residues 1–89 (MSFFNFKAFG…QQQEASERSE (89 aa)) are disordered. The residue at position 33 (Tyr33) is a Phosphotyrosine. Over residues 34 to 44 (SSPHSSNSRLS) the composition is skewed to low complexity. A compositionally biased stretch (basic residues) spans 45 to 56 (LRNKHHSPKRHS). Phosphoserine is present on Ser59. A compositionally biased stretch (low complexity) spans 63-83 (QKSTPQSQQLTSTTPQSQQQE). Thr76 carries the post-translational modification Phosphothreonine.

This sequence belongs to the MOB1/phocein family. Interacts with protein kinase CBK1 to form the RAM CBK1-MOB2 kinase complex.

The protein resides in the nucleus. The protein localises to the cytoplasm. In terms of biological role, functions as an activator subunit for the CBK1 protein kinase. Part of the regulation of ACE2 activity and cellular morphogenesis (RAM) signaling network. Required for coordinating polarized cell growth during interphase with the onset of mitosis. Required for mother/daughter cell separation after cytokinesis. Also has a role in the prevention of nuclear export of ACE2 from the daughter cell nucleus after mitotic exit. It coordinates ACE2-dependent transcription with mitotic exit network activation. The sequence is that of CBK1 kinase activator protein MOB2 (MOB2) from Saccharomyces cerevisiae (strain ATCC 204508 / S288c) (Baker's yeast).